A 51-amino-acid chain; its full sequence is Large ribosomal subunit protein eL39 (51 aa).

This sequence belongs to the eukaryotic ribosomal protein eL39 family.

The chain is Large ribosomal subunit protein eL39 from Methanococcoides burtonii (strain DSM 6242 / NBRC 107633 / OCM 468 / ACE-M).